Consider the following 318-residue polypeptide: Ferric enterobactin-binding periplasmic protein FepB (318 aa).

The N-terminal stretch at 1–26 (MRLAPLYRNALLLTGLLLSGIAAVQA) is a signal peptide. The 271-residue stretch at 48–318 (RIVSTSVTLT…QVLDRLKALF (271 aa)) folds into the Fe/B12 periplasmic-binding domain.

This sequence belongs to the bacterial solute-binding protein 8 family. In terms of assembly, the complex is composed of two ATP-binding proteins (FepC), two transmembrane proteins (FepD and FepG) and a solute-binding protein (FepB).

The protein localises to the periplasm. In terms of biological role, part of the ABC transporter complex FepBDGC involved in ferric enterobactin uptake. Binds ferric enterobactin. This Escherichia coli O6:H1 (strain CFT073 / ATCC 700928 / UPEC) protein is Ferric enterobactin-binding periplasmic protein FepB (fepB).